Reading from the N-terminus, the 374-residue chain is F-box/LRR-repeat protein 8 (374 aa).

In terms of domain architecture, F-box spans 2 to 48 (AEPGEQLPEEVLALIFRHLPLPDRAAAARVCRAWAAAATCSAVWHDT).

In terms of assembly, directly interacts with SKP1 and CUL1.

Substrate-recognition component of the SCF (SKP1-CUL1-F-box protein)-type E3 ubiquitin ligase complex. This is F-box/LRR-repeat protein 8 (FBXL8) from Bos taurus (Bovine).